We begin with the raw amino-acid sequence, 658 residues long: DNA mismatch repair protein MutL (658 aa).

Positions 114–130 (RQEDSSHATQVKAEDGK) are enriched in basic and acidic residues. 3 disordered regions span residues 114-137 (RQEDSSHATQVKAEDGKLSSPTAA), 369-401 (DYPTGNKPDTRNAFGSSGKTAPMPYQSAYAPQQ), and 438-457 (FGNMPSETPAPKTDTPLSDG).

It belongs to the DNA mismatch repair MutL/HexB family.

This protein is involved in the repair of mismatches in DNA. It is required for dam-dependent methyl-directed DNA mismatch repair. May act as a 'molecular matchmaker', a protein that promotes the formation of a stable complex between two or more DNA-binding proteins in an ATP-dependent manner without itself being part of a final effector complex. The chain is DNA mismatch repair protein MutL from Neisseria meningitidis serogroup A / serotype 4A (strain DSM 15465 / Z2491).